The following is a 520-amino-acid chain: Maturase K (520 aa).

The protein belongs to the intron maturase 2 family. MatK subfamily.

Its subcellular location is the plastid. It is found in the chloroplast. Its function is as follows. Usually encoded in the trnK tRNA gene intron. Probably assists in splicing its own and other chloroplast group II introns. The chain is Maturase K from Liriope muscari (Big blue lilyturf).